Consider the following 296-residue polypeptide: Tyrosine recombinase XerC (296 aa).

Residues alanine 2–leucine 85 enclose the Core-binding (CB) domain. Residues threonine 106–aspartate 285 enclose the Tyr recombinase domain. Active-site residues include arginine 145, lysine 169, histidine 237, arginine 240, and histidine 263. Tyrosine 272 functions as the O-(3'-phospho-DNA)-tyrosine intermediate in the catalytic mechanism.

It belongs to the 'phage' integrase family. XerC subfamily. Forms a cyclic heterotetrameric complex composed of two molecules of XerC and two molecules of XerD.

It localises to the cytoplasm. Its function is as follows. Site-specific tyrosine recombinase, which acts by catalyzing the cutting and rejoining of the recombining DNA molecules. The XerC-XerD complex is essential to convert dimers of the bacterial chromosome into monomers to permit their segregation at cell division. It also contributes to the segregational stability of plasmids. In Shewanella amazonensis (strain ATCC BAA-1098 / SB2B), this protein is Tyrosine recombinase XerC.